A 333-amino-acid polypeptide reads, in one-letter code: 5-formaminoimidazole-4-carboxamide-1-(beta)-D-ribofuranosyl 5'-monophosphate synthetase (333 aa).

5-amino-1-(5-phospho-beta-D-ribosyl)imidazole-4-carboxamide-binding residues include H20 and S85. One can recognise an ATP-grasp domain in the interval 106–313; sequence RELIKWEADQ…YFDRPMDMGE (208 aa). ATP is bound by residues 136–187 and E209; that span reads PEEV…VPAY. A 5-amino-1-(5-phospho-beta-D-ribosyl)imidazole-4-carboxamide-binding site is contributed by N229. Mg(2+) is bound by residues E268 and E281.

The protein belongs to the phosphohexose mutase family. Mg(2+) is required as a cofactor. Requires Mn(2+) as cofactor.

It catalyses the reaction 5-amino-1-(5-phospho-beta-D-ribosyl)imidazole-4-carboxamide + formate + ATP = 5-formamido-1-(5-phospho-D-ribosyl)imidazole-4-carboxamide + ADP + phosphate. Its pathway is purine metabolism; IMP biosynthesis via de novo pathway; 5-formamido-1-(5-phospho-D-ribosyl)imidazole-4-carboxamide from 5-amino-1-(5-phospho-D-ribosyl)imidazole-4-carboxamide (formate route): step 1/1. Its function is as follows. Catalyzes the ATP- and formate-dependent formylation of 5-aminoimidazole-4-carboxamide-1-beta-d-ribofuranosyl 5'-monophosphate (AICAR) to 5-formaminoimidazole-4-carboxamide-1-beta-d-ribofuranosyl 5'-monophosphate (FAICAR) in the absence of folates. This Pyrobaculum islandicum (strain DSM 4184 / JCM 9189 / GEO3) protein is 5-formaminoimidazole-4-carboxamide-1-(beta)-D-ribofuranosyl 5'-monophosphate synthetase.